Consider the following 805-residue polypeptide: Phenylalanine--tRNA ligase beta subunit (805 aa).

The tRNA-binding domain occupies 39–155 (VKVLGAFRIC…EDAPMGMRFI (117 aa)). One can recognise a B5 domain in the interval 408–479 (DTSRAYRFDP…RVASLTKLQG (72 aa)). Positions 457, 463, 466, and 467 each coordinate Mg(2+). The 98-residue stretch at 707 to 804 (SDLQAVERDF…VAKATGATLR (98 aa)) folds into the FDX-ACB domain.

Belongs to the phenylalanyl-tRNA synthetase beta subunit family. Type 1 subfamily. In terms of assembly, tetramer of two alpha and two beta subunits. Mg(2+) is required as a cofactor.

The protein resides in the cytoplasm. The enzyme catalyses tRNA(Phe) + L-phenylalanine + ATP = L-phenylalanyl-tRNA(Phe) + AMP + diphosphate + H(+). The protein is Phenylalanine--tRNA ligase beta subunit of Cereibacter sphaeroides (strain ATCC 17023 / DSM 158 / JCM 6121 / CCUG 31486 / LMG 2827 / NBRC 12203 / NCIMB 8253 / ATH 2.4.1.) (Rhodobacter sphaeroides).